A 109-amino-acid polypeptide reads, in one-letter code: MASLKKSLFLVLFLGLLSLSICEEQKRENEEDAEDENHEEESEEKRGLLDFAKHVIGIASKLGKRSEEKRFWPFMGKRSEEKRFWPFMGKRSEEKRFFRVLAKLGKLAK.

The first 22 residues, 1–22, serve as a signal peptide directing secretion; sequence MASLKKSLFLVLFLGLLSLSIC. A propeptide spanning residues 23-46 is cleaved from the precursor; that stretch reads EEQKRENEEDAEDENHEEESEEKR. Residues 27–46 form a disordered region; sequence RENEEDAEDENHEEESEEKR. The segment covering 30-42 has biased composition (acidic residues); it reads EEDAEDENHEEES. L62 bears the Leucine amide mark. Positions 66-70 are excised as a propeptide; the sequence is SEEKR. M75 is modified (methionine amide). The propeptide occupies 79–83; it reads SEEKR. M88 carries the post-translational modification Methionine amide. Propeptides lie at residues 92–96 and A108; that span reads SEEKR.

Belongs to the frog skin active peptide (FSAP) family. Brevinin subfamily. As to expression, expressed by the skin glands.

Its subcellular location is the secreted. In terms of biological role, fallaxidin-2.1 shows no antibacterial activity against Gram-positive or Gram-negative bacteria. Does not inhibit the formation of NO by neuronal nitric oxide synthase. Has no effect on splenocyte proliferation or smooth muscle contraction. Its function is as follows. Fallaxidin-3.2 shows antibacterial activity against the Gram-positive bacteria E.faecalis (MIC=100 uM) and L.lactis (MIC=500 uM). No antibacterial activity against the Gram-positive bacteria B.cereus, L.innocua, M.luteus, S.epidermidis, S.uberis and S.aureus, or the Gram-negative bacteria E.cloacae and E.coli. This is Preprofallaxidin-8 from Litoria fallax (Eastern dwarf tree frog).